Here is a 306-residue protein sequence, read N- to C-terminus: UDP-3-O-acyl-N-acetylglucosamine deacetylase (306 aa).

Zn(2+) is bound by residues histidine 79, histidine 239, and aspartate 243. Histidine 266 serves as the catalytic Proton donor.

It belongs to the LpxC family. It depends on Zn(2+) as a cofactor.

The enzyme catalyses a UDP-3-O-[(3R)-3-hydroxyacyl]-N-acetyl-alpha-D-glucosamine + H2O = a UDP-3-O-[(3R)-3-hydroxyacyl]-alpha-D-glucosamine + acetate. Its pathway is glycolipid biosynthesis; lipid IV(A) biosynthesis; lipid IV(A) from (3R)-3-hydroxytetradecanoyl-[acyl-carrier-protein] and UDP-N-acetyl-alpha-D-glucosamine: step 2/6. In terms of biological role, catalyzes the hydrolysis of UDP-3-O-myristoyl-N-acetylglucosamine to form UDP-3-O-myristoylglucosamine and acetate, the committed step in lipid A biosynthesis. This chain is UDP-3-O-acyl-N-acetylglucosamine deacetylase, found in Glaesserella parasuis serovar 5 (strain SH0165) (Haemophilus parasuis).